The sequence spans 445 residues: Histone acetyltransferase ESA1 (445 aa).

Ser17 is modified (phosphoserine). The Tudor-knot domain occupies 22–74; it reads IIKCQCWVQKNDEERLAEILSINTRKAPPKFYVHYVNYNKRLDEWITTDRINL. The segment at 88 to 114 is disordered; it reads EDNKKQKKKKATNTSETPQDSLQDGVD. Positions 99 to 109 are enriched in polar residues; that stretch reads TNTSETPQDSL. Residues 162-433 enclose the MYST-type HAT domain; sequence ARVRNLNRII…IDPNRLIWKP (272 aa). The segment at 195–220 adopts a C2HC MYST-type; degenerate zinc-finger fold; it reads IYIDDFTLQYFGSKKQYERYRKKCTL. An ESA1-RPD3 motif motif is present at residues 245–266; sequence RTWCRNLCLLSKLFLDHKTLYY. The residue at position 262 (Lys262) is an N6-acetyllysine; by autocatalysis. Residues 303–307 and 312–318 contribute to the acetyl-CoA site; these read ACILT and QRMGYGK. Glu338 serves as the catalytic Proton donor/acceptor. Ser342 serves as a coordination point for acetyl-CoA.

The protein belongs to the MYST (SAS/MOZ) family. As to quaternary structure, component of the NuA4 histone acetyltransferase complex composed of at least ACT1, ARP4, EAF3, EAF5, EAF6, EAF7, EPL1, ESA1, SWC4, TRA1, VID21, YAF9 and YNG2. The complex interacts with histones H4 (HHF1 and HHF2), H3 (HHT1 and HHT2) and H2A (HTA1 and HTA2). Autoacetylation at Lys-262 is required for proper function.

It catalyses the reaction L-lysyl-[histone] + acetyl-CoA = N(6)-acetyl-L-lysyl-[histone] + CoA + H(+). The catalysed reaction is L-lysyl-[protein] + acetyl-CoA = N(6)-acetyl-L-lysyl-[protein] + CoA + H(+). The enzyme catalyses 2-hydroxyisobutanoyl-CoA + L-lysyl-[protein] = N(6)-(2-hydroxyisobutanoyl)-L-lysyl-[protein] + CoA + H(+). It carries out the reaction (2E)-butenoyl-CoA + L-lysyl-[protein] = N(6)-(2E)-butenoyl-L-lysyl-[protein] + CoA + H(+). Functionally, catalytic component of the NuA4 histone acetyltransferase (HAT), a multiprotein complex involved in epigenetic transcriptional activation of selected genes principally by acetylation of nucleosomal histones H4, H3, H2B, H2A and H2A variant H2A.Z. Acetylates histone H4 to form H4K5ac, H4K8ac, H4K12ac and H4K16ac, histone H3 to form H3K14ac, histone H2B to form H2BK16ac, histone H2A to form H2AK4ac and H2AK7ac, and histone variant H2A.Z to form H2A.ZK14ac. Acetylation of histones gives a specific tag for epigenetic transcription initiation and elongation. Acetylation of histone H4 is essential for DNA double-strand break repair through homologous recombination. Involved in cell cycle progression. Recruitment to promoters depends on H3K4me. Also acetylates non-histone proteins, such as ATG3 and PAH1. Regulates autophagy by acetylating ATG3, controlling interaction the interaction between ATG3 and ATG8 and ATG8 lipidation. Acts as a regulator of fatty-acid-induced triacylglycerol synthesis by catalyzing acetylation of PAH1, thereby promoting the synthesis of diacylglycerol. In addition to protein acetyltransferase, can use different acyl-CoA substrates, such as 2-hydroxyisobutanoyl-CoA (2-hydroxyisobutyryl-CoA) or (2E)-butenoyl-CoA (crotonyl-CoA), and is able to mediate protein 2-hydroxyisobutyrylation and crotonylation, respectively. Catalyzes histone crotonylation. This is Histone acetyltransferase ESA1 from Saccharomyces cerevisiae (strain ATCC 204508 / S288c) (Baker's yeast).